The sequence spans 78 residues: Large ribosomal subunit protein uL10 (78 aa).

A compositionally biased stretch (low complexity) spans 40-50 (AAAAAATAPAA). The segment at 40-78 (AAAAAATAPAAETKKEEKKEEKKEETEESDDDIGLSLFH) is disordered. The span at 51-64 (ETKKEEKKEEKKEE) shows a compositional bias: basic and acidic residues.

Belongs to the universal ribosomal protein uL10 family. P0 forms a pentameric complex by interaction with dimers of P1 and P2.

The protein resides in the nucleus. It is found in the cytoplasm. In terms of biological role, ribosomal protein P0 is the functional equivalent of E.coli protein L10. This chain is Large ribosomal subunit protein uL10, found in Culicoides nubeculosus (Biting midge).